The sequence spans 76 residues: UPF0270 protein PSPA7_1664 (76 aa).

The protein belongs to the UPF0270 family.

This chain is UPF0270 protein PSPA7_1664, found in Pseudomonas paraeruginosa (strain DSM 24068 / PA7) (Pseudomonas aeruginosa (strain PA7)).